An 863-amino-acid chain; its full sequence is Chloride channel protein A (863 aa).

At 1-124 the chain is on the cytoplasmic side; the sequence is MFRNNNNDNN…TSKLNHMLKT (124 aa). The disordered stretch occupies residues 48–78; it reads ENGLINNNNNSHNNNNGGNNNNHGPSKVTHR. Over residues 49-71 the composition is skewed to low complexity; that stretch reads NGLINNNNNSHNNNNGGNNNNHG. The next 7 membrane-spanning stretches (helical) occupy residues 125–145, 171–191, 228–248, 289–309, 324–344, 367–387, and 408–428; these read FGKWIICFMIGVLVGITAYLV, IAFLVYYSINILFGVSASLVI, LVSLILAYSSGLILGPEGPMI, GAAAGVAAAFGAPIGGVLFGF, TFFACLIATFTTNIILQGFDM, LIPFALIGVAGGLFGALFVNL, and VLEVFILITITSTILYCCAAF. The disordered stretch occupies residues 434–460; the sequence is KTQANGSQTNSLDTSSSSILSSSGDNS. A compositionally biased stretch (low complexity) spans 439-460; it reads GSQTNSLDTSSSSILSSSGDNS. Helical transmembrane passes span 518-538, 539-559, and 561-581; these read IFTIPTLAVFSLISFILTTIT, SGLMLASGLFIPMMLVGATFG, and LVGQVIALFVSVDPCIYALVG. CBS domains follow at residues 661-742 and 816-863; these read MKTE…CHEQ and MNLS…KDLL.

This sequence belongs to the chloride channel (TC 2.A.49) family.

The protein resides in the membrane. Voltage-gated chloride channel. Chloride channels may have several functions including the regulation of cell volume, membrane potential stabilization and signal transduction. The chain is Chloride channel protein A (clcA) from Dictyostelium discoideum (Social amoeba).